The sequence spans 930 residues: Isoleucine--tRNA ligase (930 aa).

The 'HIGH' region motif lies at 57–67; it reads PYANGNIHVGH. E554 contributes to the L-isoleucyl-5'-AMP binding site. The short motif at 595-599 is the 'KMSKS' region element; the sequence is KMSKS. K598 is an ATP binding site. Positions 888, 891, 908, and 911 each coordinate Zn(2+).

It belongs to the class-I aminoacyl-tRNA synthetase family. IleS type 1 subfamily. Monomer. Requires Zn(2+) as cofactor.

The protein resides in the cytoplasm. The catalysed reaction is tRNA(Ile) + L-isoleucine + ATP = L-isoleucyl-tRNA(Ile) + AMP + diphosphate. Functionally, catalyzes the attachment of isoleucine to tRNA(Ile). As IleRS can inadvertently accommodate and process structurally similar amino acids such as valine, to avoid such errors it has two additional distinct tRNA(Ile)-dependent editing activities. One activity is designated as 'pretransfer' editing and involves the hydrolysis of activated Val-AMP. The other activity is designated 'posttransfer' editing and involves deacylation of mischarged Val-tRNA(Ile). This Streptococcus pneumoniae (strain P1031) protein is Isoleucine--tRNA ligase.